Consider the following 259-residue polypeptide: Flap endonuclease Xni (259 aa).

Asp-109 lines the Mg(2+) pocket. The region spanning 165–255 (VKPQQLSDYW…FNLQDLRFTA (91 aa)) is the 5'-3' exonuclease domain. Residues Leu-176, Ile-187, and Ile-190 each coordinate K(+). The interaction with DNA stretch occupies residues 189 to 194 (GIGPKA).

The protein belongs to the Xni family. It depends on Mg(2+) as a cofactor. The cofactor is K(+).

Has flap endonuclease activity. During DNA replication, flap endonucleases cleave the 5'-overhanging flap structure that is generated by displacement synthesis when DNA polymerase encounters the 5'-end of a downstream Okazaki fragment. This Vibrio vulnificus (strain CMCP6) protein is Flap endonuclease Xni.